A 435-amino-acid polypeptide reads, in one-letter code: MDYNKRSSVSTVPNAAPIRVGFVGLNAAKGWAIKTHYPAILQLSSQFQITALYSPKIETSIATIQRLKLSNATAFPTLESFASSSTIDMIVIAIQVASHYEVVMPLLEFSKNNPNLKYLFVEWALACSLDQAESIYKAAAERGVQTIISLQGRKSPYILRAKELISQGYIGDINSIEIAGNGGWYGYERPVKSPKYIYEIGNGVDLVTTTFGHTIDILQYMTSSYFSRINAMVFNNIPEQELIDERGNRLGQRVPKTVPDHLLFQGTLLNGNVPVSCSFKGGKPTKKFTKNLVIDIHGTKGDLKLEGDAGFAEISNLVLYYSGTRANDFPLANGQQAPLDPGYDAGKEIMEVYHLRNYNAIVGNIHRLYQSISDFHFNTKKIPELPSQFVMQGFDFEGFPTLMDALILHRLIESVYKSNMMGSTLNVSNISHYSL.

M1 is subject to N-acetylmethionine.

It to K.lactis GAL80. In terms of assembly, monomer.

This protein is a negative regulator for the gene expression of the lactose/galactose metabolic genes. It binds to GAL4 and so blocks transcriptional activation by it, in the absence of an inducing sugar. The polypeptide is Galactose/lactose metabolism regulatory protein GAL80 (GAL80) (Saccharomyces cerevisiae (strain ATCC 204508 / S288c) (Baker's yeast)).